Here is a 420-residue protein sequence, read N- to C-terminus: MSSSGDARPSQKGILLPAARANDTDEAAGRRSIAWPVARTCPFSPPEQYAALRAEEPIARAELWDGAPVWLISRQDHVRALLADPRVSIHPAKLPRLSPSDGEAEASRSLLTLDPPDHGALRGHFIPEFGLRRVRELRPSVEQIVTGLLDDLTARGDEADLLADFALPMATQVICRLLDIPYEDRDYFQERTEQATRPAAGEEALEALLELRDYLDRLISGKTGRESGDGMLGSMVAQARGGGLSHADVLDNAVLLLAAGHETTASMVTMSVLVLLQHPTAWRELTVNPGLLPGAVDELLRYLSIADGLRRSATADIEIDGHTIRAGDGLVFLLAAANRDEAVFSEPEAFDIHRSARRHVAFGYGPHQCLGQNLARMELEVALGAVLERLPALRPTTDVAGLRLKSDSAVFGVYELPVAW.

The interval 1-28 is disordered; that stretch reads MSSSGDARPSQKGILLPAARANDTDEAA. The heme site is built by His118, Arg122, Arg311, His367, and Cys369.

The protein belongs to the cytochrome P450 family.

It catalyses the reaction 20-oxo-5-O-beta-D-mycaminosyltylonolide + 2 reduced [2Fe-2S]-[ferredoxin] + O2 + 2 H(+) = 5-O-beta-D-mycaminosyltylonolide + 2 oxidized [2Fe-2S]-[ferredoxin] + H2O. The protein operates within antibiotic biosynthesis; tylosin biosynthesis. Its function is as follows. Involved in the biosynthesis of the complex macrolide antibiotic tylosin. Catalyzes the hydroxylation of 20-oxo-5-O-beta-mycaminosyltylactone at the C-23 position to yield 5-O-beta-mycaminosyltylonolide. This Streptomyces fradiae (Streptomyces roseoflavus) protein is 20-oxo-5-O-mycaminosyltylactone 23-monooxygenase.